Here is a 95-residue protein sequence, read N- to C-terminus: Protein NCBP2AS2 homolog (95 aa).

The chain is Protein NCBP2AS2 homolog from Ixodes scapularis (Black-legged tick).